We begin with the raw amino-acid sequence, 395 residues long: Acetylornithine aminotransferase (395 aa).

Residues 117 to 118 and Phe-144 contribute to the pyridoxal 5'-phosphate site; that span reads GA. A N(2)-acetyl-L-ornithine-binding site is contributed by Arg-147. Residue 230 to 233 coordinates pyridoxal 5'-phosphate; the sequence is DEVQ. Position 259 is an N6-(pyridoxal phosphate)lysine (Lys-259). Ser-285 contacts N(2)-acetyl-L-ornithine. Residue Thr-286 coordinates pyridoxal 5'-phosphate.

The protein belongs to the class-III pyridoxal-phosphate-dependent aminotransferase family. ArgD subfamily. In terms of assembly, homodimer. Requires pyridoxal 5'-phosphate as cofactor.

The protein resides in the cytoplasm. The catalysed reaction is N(2)-acetyl-L-ornithine + 2-oxoglutarate = N-acetyl-L-glutamate 5-semialdehyde + L-glutamate. The protein operates within amino-acid biosynthesis; L-arginine biosynthesis; N(2)-acetyl-L-ornithine from L-glutamate: step 4/4. In Methanosarcina acetivorans (strain ATCC 35395 / DSM 2834 / JCM 12185 / C2A), this protein is Acetylornithine aminotransferase.